A 187-amino-acid polypeptide reads, in one-letter code: Nodulin-related protein 1 (187 aa).

Methionine 1 carries the N-acetylmethionine modification. Disordered stretches follow at residues 1–66 (MDFF…ATNA) and 132–176 (YETS…HGFG). Basic and acidic residues predominate over residues 7–48 (QVKKKFSDKKPESSDPEPNHNKNKPGHTEPTTHKPGHGEPTT). Positions 142–158 (GGTGSHGNVGGHGGGAG) are enriched in gly residues.

In terms of assembly, interacts with RPS2. As to expression, expressed in roots, leaves, flowers and siliques.

Prevents accumulation of abscisic acid (ABA) after heat treatment, thus reducing thermotolerance. May be a negative regulator of the ABA signaling/synthesis pathway. Required for defense responses against avirulent bacteria such as P.syringae pv. tomato DC3000 (avrRpt2). This is Nodulin-related protein 1 from Arabidopsis thaliana (Mouse-ear cress).